Consider the following 329-residue polypeptide: MAWPDLDPPRLAERPLSLQEALFVLEAPPEALPALAEAAIRVKEYFFGRRLKLVRLLNVKSGFCPEDCAYCAQSARSQAAIARYPLLSLEEILERAEEAQRLSARRFCLVAALRGPTPKVLERLGEAAQAIKARFPLELCASLGLLEEGMAEALKAAGFDYYNHNLNTAPSLYPRIATTHTYQDRLWTLKRAREAGLKLCSGVILGMGEGPKEVYEMALALRELGVESLPVNFLLPIPGTPLGDGRTVAGLTPERALKALILFRLLNPKAELRASAGRERYLGPYEPLAFRMVNSIFLQGYLTQPGSPWERDRALWESLGLDVEEGACG.

Residues 46 to 275 enclose the Radical SAM core domain; it reads FFGRRLKLVR…LNPKAELRAS (230 aa). [4Fe-4S] cluster contacts are provided by Cys64, Cys68, and Cys71. Residues Cys108, Cys140, Cys200, and Arg273 each coordinate [2Fe-2S] cluster.

The protein belongs to the radical SAM superfamily. Biotin synthase family. Homodimer. [4Fe-4S] cluster is required as a cofactor. Requires [2Fe-2S] cluster as cofactor.

The catalysed reaction is (4R,5S)-dethiobiotin + (sulfur carrier)-SH + 2 reduced [2Fe-2S]-[ferredoxin] + 2 S-adenosyl-L-methionine = (sulfur carrier)-H + biotin + 2 5'-deoxyadenosine + 2 L-methionine + 2 oxidized [2Fe-2S]-[ferredoxin]. It participates in cofactor biosynthesis; biotin biosynthesis; biotin from 7,8-diaminononanoate: step 2/2. In terms of biological role, catalyzes the conversion of dethiobiotin (DTB) to biotin by the insertion of a sulfur atom into dethiobiotin via a radical-based mechanism. The chain is Biotin synthase from Thermus thermophilus (strain ATCC BAA-163 / DSM 7039 / HB27).